The chain runs to 260 residues: Acyl-coenzyme A diphosphatase FITM2 (260 aa).

Over 1-23 (MERLENCAQMFQRKFLNEAFRRH) the chain is Cytoplasmic. A helical transmembrane segment spans residues 24 to 44 (CPVLLACIALGGSLLKELSPL). Over 45–57 (PDSYWNNKRNVLN) the chain is Lumenal. The helical transmembrane segment at 58–78 (VYFVKFCWGWTLWLLLPFITL) threads the bilayer. At 79–93 (TNYKLTGSITKVLRR) the chain is on the cytoplasmic side. A helical transmembrane segment spans residues 94–114 (LSSLLVGTLFWYLCTNLFLYI). The Lumenal segment spans residues 115 to 144 (EHITGSCYESEALLDSIEHQDRKECRLHGG). A helical transmembrane segment spans residues 145–165 (FWHGFDISGHCFLLSYCILII). H154 is an active-site residue. The Cytoplasmic portion of the chain corresponds to 166–189 (LEETSVIRSIQFERHWHRMAINAQ). Transmembrane regions (helical) follow at residues 190 to 210 (FTAL…TAVY) and 211 to 231 (FHNI…WYIT). H212 is a catalytic residue. Over 232–260 (YRWWYLQPISPGLPPASASHSEKEPVYKN) the chain is Cytoplasmic.

It belongs to the FIT family. FIT2 subfamily.

Its subcellular location is the endoplasmic reticulum membrane. It catalyses the reaction an acyl-CoA + H2O = an acyl-4'-phosphopantetheine + adenosine 3',5'-bisphosphate + 2 H(+). Fatty acyl-coenzyme A (CoA) diphosphatase that hydrolyzes fatty acyl-CoA to yield acyl-4'-phosphopantetheine and adenosine 3',5'-bisphosphate. Preferentially hydrolyzes unsaturated long-chain acyl-CoA substrates in the endoplasmic reticulum (ER) lumen. This catalytic activity is required for maintaining ER structure and for lipid droplets (LDs) biogenesis, which are lipid storage organelles involved in maintaining lipid and energy homeostasis. May directly bind to diacylglycerol (DAGs) and triacylglycerol, which is also important for LD biogenesis. May support directional budding of nacent LDs from the ER into the cytosol by reducing DAG levels at sites of LD formation. May play a role in the regulation of cell morphology, ER morphology and cytoskeletal organization. This Xenopus laevis (African clawed frog) protein is Acyl-coenzyme A diphosphatase FITM2.